The following is a 470-amino-acid chain: MKKTKIVCTIGPKTESEEMLAKMLDAGMNVMRLNFSHGDYAEHGQRIQNLRNVMSKTGKTAAILLDTKGPEIRTMKLEGGNDVSLKAGQTFTFTTDKSVIGNSEMVAVTYEGFTTDLSVGNTVLVDDGLIGMEVTAIEGNKVICKVLNNGDLGENKGVNLPGVSIALPALAEKDKQDLIFGCEQGVDFVAASFIRKRSDVIEIREHLKAHGGENIHIISKIENQEGLNNFDEILEASDGIMVARGDLGVEIPVEEVIFAQKMMIEKCIRARKVVITATQMLDSMIKNPRPTRAEAGDVANAILDGTDAVMLSGESAKGKYPLEAVSIMATICERTDRVMNSRLEFNNDNRKLRITEAVCRGAVETAEKLDAPLIVVATQGGKSARAVRKYFPDATILALTTNEKTAHQLVLSKGVVPQLVKEITSTDDFYRLGKELALQSGLAHKGDVVVMVSGALVPSGTTNTASVHVL.

Arg32 contributes to the substrate binding site. K(+) contacts are provided by Asn34, Ser36, Asp66, and Thr67. ATP is bound at residue 34–37 (NFSH). Arg73 provides a ligand contact to ATP. Residue Lys76 is modified to N6-acetyllysine. Lys156 is a binding site for ATP. Position 222 (Glu222) interacts with Mg(2+). Positions 245, 246, and 278 each coordinate substrate. Asp246 contributes to the Mg(2+) binding site. N6-acetyllysine is present on Lys319.

It belongs to the pyruvate kinase family. In terms of assembly, homotetramer. Mg(2+) is required as a cofactor. Requires K(+) as cofactor.

It carries out the reaction pyruvate + ATP = phosphoenolpyruvate + ADP + H(+). Its pathway is carbohydrate degradation; glycolysis; pyruvate from D-glyceraldehyde 3-phosphate: step 5/5. The protein is Pyruvate kinase I (pykF) of Escherichia coli O157:H7.